The chain runs to 519 residues: 2,3-bisphosphoglycerate-independent phosphoglycerate mutase (519 aa).

Positions 18 and 68 each coordinate Mn(2+). The active-site Phosphoserine intermediate is Ser68. Residues His129, 159 to 160 (RD), Arg191, Arg197, 267 to 270 (RADR), and Lys341 contribute to the substrate site. Mn(2+) contacts are provided by Asp408, His412, Asp449, His450, and His468.

It belongs to the BPG-independent phosphoglycerate mutase family. In terms of assembly, monomer. It depends on Mn(2+) as a cofactor.

The catalysed reaction is (2R)-2-phosphoglycerate = (2R)-3-phosphoglycerate. The protein operates within carbohydrate degradation; glycolysis; pyruvate from D-glyceraldehyde 3-phosphate: step 3/5. In terms of biological role, catalyzes the interconversion of 2-phosphoglycerate and 3-phosphoglycerate. The sequence is that of 2,3-bisphosphoglycerate-independent phosphoglycerate mutase from Coxiella burnetii (strain RSA 331 / Henzerling II).